We begin with the raw amino-acid sequence, 522 residues long: Cytochrome P450 1A1 (522 aa).

Phenylalanine 229 is a binding site for substrate. Heme is bound at residue cysteine 463.

This sequence belongs to the cytochrome P450 family. It depends on heme as a cofactor. In terms of tissue distribution, liver.

The protein localises to the endoplasmic reticulum membrane. It is found in the microsome membrane. It carries out the reaction an organic molecule + reduced [NADPH--hemoprotein reductase] + O2 = an alcohol + oxidized [NADPH--hemoprotein reductase] + H2O + H(+). Its function is as follows. Cytochromes P450 are a group of heme-thiolate monooxygenases. They oxidize a variety of structurally unrelated compounds, including steroids, fatty acids, and xenobiotics. This Oncorhynchus mykiss (Rainbow trout) protein is Cytochrome P450 1A1 (cyp1a1).